The chain runs to 353 residues: Photosystem II protein D1 (353 aa).

Thr2 carries the post-translational modification N-acetylthreonine. The residue at position 2 (Thr2) is a Phosphothreonine. 3 consecutive transmembrane segments (helical) span residues 29–46 (YIGW…TATS), 118–133 (HFLL…EWEL), and 142–156 (WIAV…AATA). His118 lines the chlorophyll a pocket. Residue Tyr126 coordinates pheophytin a. The [CaMn4O5] cluster site is built by Asp170 and Glu189. Residues 197–218 (FHMLGVAGVFGGSLFSAMHGSL) form a helical membrane-spanning segment. A chlorophyll a-binding site is contributed by His198. A quinone-binding positions include His215 and 264-265 (SF). His215 serves as a coordination point for Fe cation. Residue His272 coordinates Fe cation. The helical transmembrane segment at 274–288 (FLAAWPVVGIWFTAL) threads the bilayer. [CaMn4O5] cluster contacts are provided by His332, Glu333, Asp342, and Ala344. Residues 345–353 (AVEVPSTNG) constitute a propeptide that is removed on maturation.

Belongs to the reaction center PufL/M/PsbA/D family. In terms of assembly, PSII is composed of 1 copy each of membrane proteins PsbA, PsbB, PsbC, PsbD, PsbE, PsbF, PsbH, PsbI, PsbJ, PsbK, PsbL, PsbM, PsbT, PsbX, PsbY, PsbZ, Psb30/Ycf12, at least 3 peripheral proteins of the oxygen-evolving complex and a large number of cofactors. It forms dimeric complexes. The D1/D2 heterodimer binds P680, chlorophylls that are the primary electron donor of PSII, and subsequent electron acceptors. It shares a non-heme iron and each subunit binds pheophytin, quinone, additional chlorophylls, carotenoids and lipids. D1 provides most of the ligands for the Mn4-Ca-O5 cluster of the oxygen-evolving complex (OEC). There is also a Cl(-1) ion associated with D1 and D2, which is required for oxygen evolution. The PSII complex binds additional chlorophylls, carotenoids and specific lipids. is required as a cofactor. Tyr-161 forms a radical intermediate that is referred to as redox-active TyrZ, YZ or Y-Z. Post-translationally, C-terminally processed by CTPA; processing is essential to allow assembly of the oxygen-evolving complex and thus photosynthetic growth.

The protein resides in the plastid. The protein localises to the chloroplast thylakoid membrane. The catalysed reaction is 2 a plastoquinone + 4 hnu + 2 H2O = 2 a plastoquinol + O2. Photosystem II (PSII) is a light-driven water:plastoquinone oxidoreductase that uses light energy to abstract electrons from H(2)O, generating O(2) and a proton gradient subsequently used for ATP formation. It consists of a core antenna complex that captures photons, and an electron transfer chain that converts photonic excitation into a charge separation. The D1/D2 (PsbA/PsbD) reaction center heterodimer binds P680, the primary electron donor of PSII as well as several subsequent electron acceptors. The chain is Photosystem II protein D1 from Eucalyptus globulus subsp. globulus (Tasmanian blue gum).